A 399-amino-acid polypeptide reads, in one-letter code: 4-hydroxy-3-methylbut-2-enyl diphosphate reductase (399 aa).

Cys-66 contributes to the [4Fe-4S] cluster binding site. (2E)-4-hydroxy-3-methylbut-2-enyl diphosphate is bound at residue His-96. His-96 lines the dimethylallyl diphosphate pocket. His-96 contacts isopentenyl diphosphate. [4Fe-4S] cluster is bound at residue Cys-157. His-185 provides a ligand contact to (2E)-4-hydroxy-3-methylbut-2-enyl diphosphate. Residue His-185 coordinates dimethylallyl diphosphate. His-185 provides a ligand contact to isopentenyl diphosphate. Glu-187 functions as the Proton donor in the catalytic mechanism. Residue Thr-250 participates in (2E)-4-hydroxy-3-methylbut-2-enyl diphosphate binding. Cys-288 contributes to the [4Fe-4S] cluster binding site. (2E)-4-hydroxy-3-methylbut-2-enyl diphosphate-binding residues include Ser-317, Ser-318, Asn-319, and Ser-380. Dimethylallyl diphosphate contacts are provided by Ser-317, Ser-318, Asn-319, and Ser-380. Residues Ser-317, Ser-318, Asn-319, and Ser-380 each contribute to the isopentenyl diphosphate site.

It belongs to the IspH family. Requires [4Fe-4S] cluster as cofactor.

It catalyses the reaction isopentenyl diphosphate + 2 oxidized [2Fe-2S]-[ferredoxin] + H2O = (2E)-4-hydroxy-3-methylbut-2-enyl diphosphate + 2 reduced [2Fe-2S]-[ferredoxin] + 2 H(+). It carries out the reaction dimethylallyl diphosphate + 2 oxidized [2Fe-2S]-[ferredoxin] + H2O = (2E)-4-hydroxy-3-methylbut-2-enyl diphosphate + 2 reduced [2Fe-2S]-[ferredoxin] + 2 H(+). The protein operates within isoprenoid biosynthesis; dimethylallyl diphosphate biosynthesis; dimethylallyl diphosphate from (2E)-4-hydroxy-3-methylbutenyl diphosphate: step 1/1. It functions in the pathway isoprenoid biosynthesis; isopentenyl diphosphate biosynthesis via DXP pathway; isopentenyl diphosphate from 1-deoxy-D-xylulose 5-phosphate: step 6/6. In terms of biological role, catalyzes the conversion of 1-hydroxy-2-methyl-2-(E)-butenyl 4-diphosphate (HMBPP) into a mixture of isopentenyl diphosphate (IPP) and dimethylallyl diphosphate (DMAPP). Acts in the terminal step of the DOXP/MEP pathway for isoprenoid precursor biosynthesis. This is 4-hydroxy-3-methylbut-2-enyl diphosphate reductase from Synechococcus sp. (strain CC9902).